Reading from the N-terminus, the 274-residue chain is 3-methyl-2-oxobutanoate hydroxymethyltransferase (274 aa).

Mg(2+)-binding residues include aspartate 49 and aspartate 88. 3-methyl-2-oxobutanoate-binding positions include 49-50, aspartate 88, and lysine 118; that span reads DS. Glutamate 120 contacts Mg(2+). Glutamate 187 functions as the Proton acceptor in the catalytic mechanism.

Belongs to the PanB family. Homodecamer; pentamer of dimers. Requires Mg(2+) as cofactor.

The protein localises to the cytoplasm. The enzyme catalyses 3-methyl-2-oxobutanoate + (6R)-5,10-methylene-5,6,7,8-tetrahydrofolate + H2O = 2-dehydropantoate + (6S)-5,6,7,8-tetrahydrofolate. The protein operates within cofactor biosynthesis; (R)-pantothenate biosynthesis; (R)-pantoate from 3-methyl-2-oxobutanoate: step 1/2. In terms of biological role, catalyzes the reversible reaction in which hydroxymethyl group from 5,10-methylenetetrahydrofolate is transferred onto alpha-ketoisovalerate to form ketopantoate. This is 3-methyl-2-oxobutanoate hydroxymethyltransferase from Rhodopseudomonas palustris (strain HaA2).